We begin with the raw amino-acid sequence, 358 residues long: Methionine aminopeptidase 2 (358 aa).

Histidine 109 is a substrate binding site. The a divalent metal cation site is built by aspartate 130, aspartate 141, and histidine 210. A substrate-binding site is contributed by histidine 218. Residues glutamate 243 and glutamate 339 each contribute to the a divalent metal cation site.

The protein belongs to the peptidase M24A family. Methionine aminopeptidase eukaryotic type 2 subfamily. Co(2+) is required as a cofactor. Requires Zn(2+) as cofactor. The cofactor is Mn(2+). Fe(2+) serves as cofactor.

It localises to the cytoplasm. The enzyme catalyses Release of N-terminal amino acids, preferentially methionine, from peptides and arylamides.. Its function is as follows. Cotranslationally removes the N-terminal methionine from nascent proteins. The N-terminal methionine is often cleaved when the second residue in the primary sequence is small and uncharged (Met-Ala-, Cys, Gly, Pro, Ser, Thr, or Val). The chain is Methionine aminopeptidase 2 from Encephalitozoon intestinalis (strain ATCC 50506) (Microsporidian parasite).